The sequence spans 241 residues: B-cell receptor-associated protein 29 (241 aa).

Residues 1–6 (MTLQWA) are Lumenal-facing. Residues 7-27 (AVATFLYAEIGLILIFCLPFI) traverse the membrane as a helical segment. At 28 to 43 (PPQRWQKIFSFNVWGK) the chain is on the cytoplasmic side. A helical membrane pass occupies residues 44 to 64 (IATFWNKAFLTIIILLIVLFL). Topologically, residues 65–103 (DAVREVRKYSSVHTIEKSSTSRPDAYEHTQMKLFRSQRN) are lumenal. The chain crosses the membrane as a helical span at residues 104–124 (LYISGFSLFFWLVLRRLVTLI). Topologically, residues 125-241 (TQLAKELSNK…RLERGNKKRL (117 aa)) are cytoplasmic. Positions 166–233 (GKDEECVLEA…KEHSELQDRL (68 aa)) form a coiled coil. Residues 198–223 (LSKAQNDVMEMKMQSERLSKEYDQLL) are disordered. Residues 206–223 (MEMKMQSERLSKEYDQLL) show a composition bias toward basic and acidic residues. The Di-lysine motif signature appears at 238–241 (KKRL).

Belongs to the BCAP29/BCAP31 family. As to quaternary structure, homodimer. Heterodimer with BCAP31. Binds CASP8 (isoform 9) as a complex containing BCAP31, BCAP29, BCL2 and/or BCL2L1. Interacts with VAMP3, VAMP1 and membrane IgD immunoglobulins. May interact with ACTG1 and non-muscle myosin II.

It is found in the endoplasmic reticulum membrane. In terms of biological role, may play a role in anterograde transport of membrane proteins from the endoplasmic reticulum to the Golgi. May be involved in CASP8-mediated apoptosis. The protein is B-cell receptor-associated protein 29 (BCAP29) of Homo sapiens (Human).